Reading from the N-terminus, the 585-residue chain is Putative sulfur deprivation response regulator (585 aa).

The next 5 helical transmembrane spans lie at valine 5 to isoleucine 25, alanine 30 to alanine 50, valine 83 to valine 103, phenylalanine 117 to serine 137, and isoleucine 162 to leucine 182. 2 consecutive RCK C-terminal domains span residues methionine 189 to leucine 274 and glutamate 288 to tryptophan 372. Transmembrane regions (helical) follow at residues leucine 389–valine 409, proline 411–valine 431, isoleucine 442–alanine 462, valine 482–valine 502, and phenylalanine 561–phenylalanine 581.

Belongs to the CitM (TC 2.A.11) transporter family.

Its subcellular location is the membrane. Its function is as follows. Not known; mutations in SAC1 produces cells that cannot synthesize arylsulfatase and cannot take up sulfate as rapidly as wild-type cells. SAC1 is necessary for cells to survive sulfur deprivation. The protein is Putative sulfur deprivation response regulator (SAC1) of Chlamydomonas reinhardtii (Chlamydomonas smithii).